We begin with the raw amino-acid sequence, 708 residues long: Glycine--tRNA ligase beta subunit (708 aa).

It belongs to the class-II aminoacyl-tRNA synthetase family. Tetramer of two alpha and two beta subunits.

It is found in the cytoplasm. The catalysed reaction is tRNA(Gly) + glycine + ATP = glycyl-tRNA(Gly) + AMP + diphosphate. This chain is Glycine--tRNA ligase beta subunit, found in Methylobacillus flagellatus (strain ATCC 51484 / DSM 6875 / VKM B-1610 / KT).